The primary structure comprises 502 residues: Glycerol kinase (502 aa).

Thr-14 provides a ligand contact to ADP. 3 residues coordinate ATP: Thr-14, Thr-15, and Ser-16. Residue Thr-14 participates in sn-glycerol 3-phosphate binding. ADP is bound at residue Arg-18. Sn-glycerol 3-phosphate is bound by residues Arg-84, Glu-85, Tyr-136, and Asp-246. Glycerol-binding residues include Arg-84, Glu-85, Tyr-136, Asp-246, and Gln-247. Residues Thr-268 and Gly-311 each contribute to the ADP site. ATP is bound by residues Thr-268, Gly-311, Gln-315, and Gly-412. Positions 412 and 416 each coordinate ADP.

It belongs to the FGGY kinase family. As to quaternary structure, homotetramer and homodimer (in equilibrium). Heterodimer with EIIA-Glc. Binds 1 zinc ion per glycerol kinase EIIA-Glc dimer. The zinc ion is important for dimerization.

The enzyme catalyses glycerol + ATP = sn-glycerol 3-phosphate + ADP + H(+). It functions in the pathway polyol metabolism; glycerol degradation via glycerol kinase pathway; sn-glycerol 3-phosphate from glycerol: step 1/1. Activity of this regulatory enzyme is affected by several metabolites. Allosterically and non-competitively inhibited by fructose 1,6-bisphosphate (FBP) and unphosphorylated phosphocarrier protein EIIA-Glc (III-Glc), an integral component of the bacterial phosphotransferase (PTS) system. Key enzyme in the regulation of glycerol uptake and metabolism. Catalyzes the phosphorylation of glycerol to yield sn-glycerol 3-phosphate. The polypeptide is Glycerol kinase (Escherichia coli O127:H6 (strain E2348/69 / EPEC)).